Here is a 316-residue protein sequence, read N- to C-terminus: Transcription initiation factor IIB (316 aa).

The TFIIB-type zinc finger occupies 11 to 42; that stretch reads PRVTCPNHPDAILVEDYRAGDMICPECGLVVG. Zn(2+)-binding residues include C15, H18, C34, and C37. Phosphoserine is present on residues S70, S76, and S92. 2 repeat units span residues 124-200 and 218-294. Residues K152, R154, K189, and K196 each contribute to the DNA site. Residues 189 to 193 form a core promoter DNA-binding region; that stretch reads KEIGR. K238 carries the N6-acetyllysine; by autocatalysis modification. The necessary for TATA box-bound TBP complex formation stretch occupies residues 244–316; the sequence is LVPGRSPISV…DTPVDKLPQL (73 aa). Residue R248 participates in DNA binding. Positions 249–252 are core promoter DNA-binding; sequence SPIS. 5 residues coordinate DNA: K272, A281, T284, R286, and R290. Positions 283-286 are core promoter DNA-binding; the sequence is VTIR.

The protein belongs to the TFIIB family. As to quaternary structure, found in a ternary complex with TATA box-bound TBP. Part of a TFIID-containing RNA polymerase II pre-initiation complex (PIC) that is composed of TBP and at least GTF2A1, GTF2A2, GTF2E1, GTF2E2, GTF2F1, GTF2H2, GTF2H3, GTF2H4, GTF2H5, GTF2B, TCEA1, ERCC2, ERCC3, TAF1, TAF2, TAF3, TAF4, TAF5, TAF6, TAF7, TAF8, TAF9, TAF10, TAF11, TAF12 and TAF13. Associates with TFIID-TFIIA (DA complex) to form TFIID-TFIIA-TFIIB (DAB complex), which is then recognized by RNA polymerase II (Pol II). Found in a RNA polymerase II initiation complex. Interacts (via C-terminus) with TBP; this interaction with TATA box-bound TBP guides Pol II into the PIC. Interacts (via N-terminus) with Pol II. Interacts (via C-terminus) with SSU72; this interaction is inhibited by SYMPK. Interacts with NR2F1; this interaction is direct. Interacts with PGR. Interacts with ESR1. Interacts with GTF2F1 (via C-terminus and preferentially via acetylated form); this interaction prevents binding of GTF2B to GTF2F2. Interacts with GTF2F2 (via N-terminus); this interaction is inhibited in presence of GTF2F1. Interacts with the transcription elongation factor TCEA2. Interacts with HSF1 (via transactivation domain). Interacts with GPBP1. In terms of processing, acetylated. Autoacetylated; autoacetylation at Lys-238 stimulates transcription activation.

The protein localises to the nucleus. It is found in the chromosome. It catalyses the reaction L-lysyl-[protein] + acetyl-CoA = N(6)-acetyl-L-lysyl-[protein] + CoA + H(+). In terms of biological role, general transcription factor that plays a role in transcription initiation by RNA polymerase II (Pol II). Involved in the pre-initiation complex (PIC) formation and Pol II recruitment at promoter DNA. Together with the TATA box-bound TBP forms the core initiation complex and provides a bridge between TBP and the Pol II-TFIIF complex. Released from the PIC early following the onset of transcription during the initiation and elongation transition and reassociates with TBP during the next transcription cycle. Associates with chromatin to core promoter-specific regions. Binds to two distinct DNA core promoter consensus sequence elements in a TBP-independent manner; these IIB-recognition elements (BREs) are localized immediately upstream (BREu), 5'-[GC][GC][GA]CGCC-3', and downstream (BREd), 5'-[GA]T[TGA][TG][GT][TG][TG]-3', of the TATA box element. Modulates transcription start site selection. Also exhibits autoacetyltransferase activity that contributes to the activated transcription. In Mus musculus (Mouse), this protein is Transcription initiation factor IIB.